The chain runs to 66 residues: Ocellatin-PT2 (66 aa).

A signal peptide spans 1–22 (MAFLKKSLFLVLFLGLVSLSIC). Positions 23–39 (DEEKRQDEDDDDDDDEE) are excised as a propeptide. At V66 the chain carries Valine amide.

As to expression, expressed by the skin glands.

It localises to the secreted. In terms of biological role, has no antibacterial activity against Gram-negative bacteria E.coli ATCC 25922, S.pneumoniae ATCC 700603 and S.choleraesuis ATCC 14028 or against Gram-positive bacterium S.aureus ATCC 29313. Shows no hemolytic activity and no cytotoxicity. The sequence is that of Ocellatin-PT2 from Leptodactylus pustulatus (Ceara white-lipped frog).